A 52-amino-acid chain; its full sequence is Light-harvesting protein B800/830/1020 alpha-1 chain (52 aa).

At Met1–Arg12 the chain is on the cytoplasmic side. Residues Ile13 to Met33 form a helical membrane-spanning segment. His29 serves as a coordination point for a bacteriochlorophyll. Topologically, residues Thr34–Ser52 are periplasmic.

This sequence belongs to the antenna complex alpha subunit family. The core complex is formed by different alpha and beta chains, binding bacteriochlorophyll molecules, and arranged most probably in tetrameric structures disposed around the reaction center. The non-pigmented gamma chains may constitute additional components.

The protein resides in the cell inner membrane. Its function is as follows. Antenna complexes are light-harvesting systems, which transfer the excitation energy to the reaction centers. The chain is Light-harvesting protein B800/830/1020 alpha-1 chain from Halorhodospira halochloris (Ectothiorhodospira halochloris).